The chain runs to 512 residues: Maturase K (512 aa).

It belongs to the intron maturase 2 family. MatK subfamily.

It is found in the plastid. Its subcellular location is the chloroplast. In terms of biological role, usually encoded in the trnK tRNA gene intron. Probably assists in splicing its own and other chloroplast group II introns. The polypeptide is Maturase K (Dalea wrightii (Wright's prairie clover)).